The chain runs to 486 residues: MFSPTALRPRYAKWLIATGLFLMLSGCVDKPNTLERVKEDGVLRVVTRNSPATYFQDRSGETGFEYELVKRFADDLGVELKIETADNLDDLFNQVGKPNGPVLAAAGLVSSEQRKKQVRFSRSYLEVTPQIIYRNGQSRPTDAGDLVGKKIMVLKGSTHAEQLAELKQKYPGIQYEESDAVEVVDLLRMVDEGQIDLTLVDSNEVAMNQVYFTNIRVAFDLGDARSQSWAVAAGEDNSLLNEINSYLDKVQKNGTLQRLKDRYYGHVDVLGYMGATTFAQHLQQRLPKYEQHFKAYAKKEKVDWRLLAAIGYQESLWQPAVTSKTGVRGLMMLTQNTAQAMGVSNRLDPKQSIMGGAKYLAYMKDQLDESIQEPDRTWFALAAYNVGSGHLDDARKLAAKEGLNPDKWLDVKKILPRLSQKQWYSKTRYGYARGGEPVHFVANIRRYYDILTWVTQPQLEGDQVAEGNLHVPGIDKSKPAQEPAPL.

The first 29 residues, 1 to 29 (MFSPTALRPRYAKWLIATGLFLMLSGCVD), serve as a signal peptide directing secretion. Residues 30-267 (KPNTLERVKE…RLKDRYYGHV (238 aa)) form a non-LT domain region. An LT domain region spans residues 268–486 (DVLGYMGATT…SKPAQEPAPL (219 aa)). The active site involves Glu-314.

The protein in the N-terminal section; belongs to the bacterial solute-binding protein 3 family. In the C-terminal section; belongs to the transglycosylase Slt family.

It localises to the cell outer membrane. It carries out the reaction Exolytic cleavage of the (1-&gt;4)-beta-glycosidic linkage between N-acetylmuramic acid (MurNAc) and N-acetylglucosamine (GlcNAc) residues in peptidoglycan, from either the reducing or the non-reducing ends of the peptidoglycan chains, with concomitant formation of a 1,6-anhydrobond in the MurNAc residue.. Functionally, murein-degrading enzyme that degrades murein glycan strands and insoluble, high-molecular weight murein sacculi, with the concomitant formation of a 1,6-anhydromuramoyl product. Lytic transglycosylases (LTs) play an integral role in the metabolism of the peptidoglycan (PG) sacculus. Their lytic action creates space within the PG sacculus to allow for its expansion as well as for the insertion of various structures such as secretion systems and flagella. The sequence is that of Membrane-bound lytic murein transglycosylase F from Pseudomonas fluorescens (strain Pf0-1).